Consider the following 244-residue polypeptide: Flavin-dependent thymidylate synthase (244 aa).

Positions 2 to 207 (VRVTLVNYTR…ELRPIIKWAK (206 aa)) constitute a ThyX domain. FAD is bound by residues Ser-56, 80-82 (RHR), and Gln-88. Residues 77–80 (QLVR), 88–92 (QQSQR), and Arg-146 contribute to the dUMP site. Positions 80 to 90 (RHRIASYTQQS) match the ThyX motif motif. Residues 162–164 (NLR) and His-168 each bind FAD. Arg-173 contacts dUMP. Arg-173 (involved in ionization of N3 of dUMP, leading to its activation) is an active-site residue.

This sequence belongs to the thymidylate synthase ThyX family. Homotetramer. Requires FAD as cofactor.

It catalyses the reaction dUMP + (6R)-5,10-methylene-5,6,7,8-tetrahydrofolate + NADPH + H(+) = dTMP + (6S)-5,6,7,8-tetrahydrofolate + NADP(+). Its pathway is pyrimidine metabolism; dTTP biosynthesis. Functionally, catalyzes the reductive methylation of 2'-deoxyuridine-5'-monophosphate (dUMP) to 2'-deoxythymidine-5'-monophosphate (dTMP) while utilizing 5,10-methylenetetrahydrofolate (mTHF) as the methyl donor, and NADPH and FADH(2) as the reductant. This is Flavin-dependent thymidylate synthase from Pyrococcus abyssi (strain GE5 / Orsay).